A 347-amino-acid polypeptide reads, in one-letter code: NADH-ubiquinone oxidoreductase chain 2 (347 aa).

Helical transmembrane passes span 3–23 (PPILIIIMATIMTGTMIVMLS), 25–45 (HWLLIWIGFEMNMLAVIPVLM), 66–86 (ASMLLMMGVTINLLYSGQWVV), 96–116 (IMMTIALTMKLGLSPFHFWVP), 122–142 (ITLTSGMILLTWQKIAPMSVL), 149–169 (INTNLLMLVALVSVLVGGWGG), 178–198 (IMAYSSIAHMGWMAAIIIYNP), 201–221 (MILNLVLYILMTLSTFMLFML), 237–257 (FPLITSIILILMLSLGGLPPL), 274–294 (NMIIIPTLMAITALLNLYFYL), and 323–343 (TILLPPLIITSTMLLPLTPML).

Belongs to the complex I subunit 2 family. In terms of assembly, core subunit of respiratory chain NADH dehydrogenase (Complex I) which is composed of 45 different subunits. Interacts with TMEM242.

It localises to the mitochondrion inner membrane. It carries out the reaction a ubiquinone + NADH + 5 H(+)(in) = a ubiquinol + NAD(+) + 4 H(+)(out). Functionally, core subunit of the mitochondrial membrane respiratory chain NADH dehydrogenase (Complex I) which catalyzes electron transfer from NADH through the respiratory chain, using ubiquinone as an electron acceptor. Essential for the catalytic activity and assembly of complex I. This Canis rufus (Red wolf) protein is NADH-ubiquinone oxidoreductase chain 2.